Consider the following 124-residue polypeptide: Histone H2B 1/2 (124 aa).

Residues 1–32 are disordered; the sequence is MPEPAKAAPKKGSKKAVTKTAGKGGKKRKRTR. An N6-acetyllysine mark is found at Lys-6 and Lys-11. The segment covering 8–17 has biased composition (basic residues); it reads APKKGSKKAV. At Ser-13 the chain carries Phosphoserine. 2 positions are modified to N6-acetyllysine: Lys-14 and Lys-19. Ser-111 is a glycosylation site (O-linked (GlcNAc) serine). Lys-119 is covalently cross-linked (Glycyl lysine isopeptide (Lys-Gly) (interchain with G-Cter in ubiquitin)).

This sequence belongs to the histone H2B family. As to quaternary structure, the nucleosome is a histone octamer containing two molecules each of H2A, H2B, H3 and H4 assembled in one H3-H4 heterotetramer and two H2A-H2B heterodimers. The octamer wraps approximately 147 bp of DNA. Post-translationally, monoubiquitination of Lys-119 by the BRE1 gives a specific tag for epigenetic transcriptional activation and is also prerequisite for histone H3 'Lys-4' and 'Lys-79' methylation. In terms of processing, phosphorylated during apoptosis; which facilitates apoptotic chromatin condensation. GlcNAcylation at Ser-111 promotes monoubiquitination of Lys-119. It fluctuates in response to extracellular glucose, and associates with transcribed genes.

It localises to the nucleus. Its subcellular location is the chromosome. Its function is as follows. Core component of nucleosome. Nucleosomes wrap and compact DNA into chromatin, limiting DNA accessibility to the cellular machineries which require DNA as a template. Histones thereby play a central role in transcription regulation, DNA repair, DNA replication and chromosomal stability. DNA accessibility is regulated via a complex set of post-translational modifications of histones, also called histone code, and nucleosome remodeling. The protein is Histone H2B 1/2 of Danio rerio (Zebrafish).